The following is a 941-amino-acid chain: Zinc finger protein 507 (941 aa).

At Ser-95 the chain carries Phosphoserine. 2 consecutive C2H2-type zinc fingers follow at residues 122 to 144 (YQCS…VKQH) and 152 to 175 (LMCS…VSEH). Over residues 165 to 177 (QELEAHVVSEHEN) the composition is skewed to basic and acidic residues. Positions 165–198 (QELEAHVVSEHENSASSQARSSPSGQGATERKSE) are disordered. A compositionally biased stretch (low complexity) spans 178-192 (SASSQARSSPSGQGA). The segment at 237–259 (YRCLFCSYTCGQQRMLKTHAWKH) adopts a C2H2-type 3 zinc-finger fold. Residue Ser-415 is modified to Phosphoserine. A disordered region spans residues 455 to 477 (ELSKGLAPDENAPPGRRRTNSES). 5 consecutive C2H2-type zinc fingers follow at residues 630–652 (YRCR…LRVH), 658–680 (YQCP…MINH), 686–709 (HQCK…REQH), 746–768 (YRCD…RRVH), and 774–796 (YRCS…MWKH). Positions 823–856 (GKSRGKPLLTSSEERTGPTTGSPENLVSSSELTS) are disordered. Polar residues predominate over residues 839–856 (GPTTGSPENLVSSSELTS). A C2H2-type 9 zinc finger spans residues 899-921 (FCCCICGFESTSKESLLDHMKEH).

This sequence belongs to the krueppel C2H2-type zinc-finger protein family.

The protein localises to the nucleus. Its function is as follows. May be involved in transcriptional regulation. The polypeptide is Zinc finger protein 507 (Znf507) (Mus musculus (Mouse)).